The primary structure comprises 614 residues: Vitamin B12 transporter BtuB (614 aa).

Positions M1 to A20 are cleaved as a signal peptide. The Periplasmic portion of the chain corresponds to Q21 to G157. The short motif at D26–N33 is the TonB box element. A TBDR plug domain is found at P38–T152. Cyanocob(III)alamin is bound by residues L83, S85, N92, and V110–S111. A TBDR beta-barrel domain is found at E155–F614. The chain crosses the membrane as a beta stranded span at residues T158 to G165. Over S166 to S168 the chain is Extracellular. Residues Y169–Q178 form a beta stranded membrane-spanning segment. The Periplasmic portion of the chain corresponds to Q179–K183. The beta stranded transmembrane segment at T184 to T195 threads the bilayer. The Extracellular segment spans residues H196–G216. Residues D199, Q211, D213, and D215 each coordinate Ca(2+). Residues F217 to E227 form a beta stranded membrane-spanning segment. Over H228 to T231 the chain is Periplasmic. Residues D232–N248 form a beta stranded membrane-spanning segment. Ca(2+) is bound by residues Y249 and D250. Over Y249 to T262 the chain is Extracellular. A251 is a cyanocob(III)alamin binding site. D261 is a binding site for Ca(2+). Residues R263–N277 traverse the membrane as a beta stranded segment. Position 278 (G278) is a topological domain, periplasmic. A beta stranded membrane pass occupies residues E279–N296. Over Y297–A308 the chain is Extracellular. A cyanocob(III)alamin-binding site is contributed by T309. Residues T309–I325 traverse the membrane as a beta stranded segment. The Periplasmic portion of the chain corresponds to V326–G327. A beta stranded transmembrane segment spans residues H328–W337. The Extracellular portion of the chain corresponds to Q338 to G352. The chain crosses the membrane as a beta stranded span at residues Y353 to G369. D370 is a topological domain (periplasmic). The chain crosses the membrane as a beta stranded span at residues F371–D381. Over N382–Q384 the chain is Extracellular. The chain crosses the membrane as a beta stranded span at residues F385–I400. Residues E401–G402 are Periplasmic-facing. A beta stranded transmembrane segment spans residues Y403–N417. Over L418–E433 the chain is Extracellular. The beta stranded transmembrane segment at K434–E443 threads the bilayer. Topologically, residues G444–G448 are periplasmic. The beta stranded transmembrane segment at V449 to N458 threads the bilayer. Residues D459–K472 lie on the Extracellular side of the membrane. Residues Y473–F490 traverse the membrane as a beta stranded segment. Over D491–G493 the chain is Periplasmic. The beta stranded transmembrane segment at P494 to A509 threads the bilayer. Residues I510–L516 are Extracellular-facing. R517 is a cyanocob(III)alamin binding site. The chain crosses the membrane as a beta stranded span at residues R517–W529. Residues Q530–F534 are Periplasmic-facing. A beta stranded membrane pass occupies residues D535–D550. Residue Y551 participates in cyanocob(III)alamin binding. Residues Y551–Q557 are Extracellular-facing. The chain crosses the membrane as a beta stranded span at residues T558–A572. At Y573–K584 the chain is on the periplasmic side. The chain crosses the membrane as a beta stranded span at residues I585–V596. Over Y597 to T601 the chain is Extracellular. The short motif at Y597 to F614 is the TonB C-terminal box element. Residues A602–F614 form a beta stranded membrane-spanning segment.

It belongs to the TonB-dependent receptor family. BtuB (TC 1.B.14.3.1) subfamily. In terms of assembly, interacts with TonB. (Microbial infection) The hairpin motif of the receptor-binding domain of colicin E3 (ColE3) interacts with BtuB without displacing BtuB's central plug. An N-terminal fragment of E3 binds OmpF; trimeric complexes with ColE3, BtuB and OmpF can be cross-linked and immunoprecipitated.

Its subcellular location is the cell outer membrane. Calcium increases vitamin B12 binding affinity by a factor of 50-100. Its activity is regulated as follows. (Microbial infection) Colicins E1, E3 and K inhibit cyanocobalamin (CN-B12) uptake; E1 and E3 inhibit binding of CN-B12 to cells while colicin K inhibits a later, energy-dependent step of CN-B12. Involved in the active translocation of vitamin B12 (cyanocobalamin) across the outer membrane to the periplasmic space. It derives its energy for transport by interacting with the trans-periplasmic membrane protein TonB. In terms of biological role, (Microbial infection) Acts as a receptor for bacteriophages BF23 and C1, and for A and E colicins. Cyanocobalamin (CN-B12) in solid medium protects against colicins E1 and E3. Does not act as the translocon for colicin E3 (ColE3). The translocon is OmpF; trimeric complexes with ColE3, BtuB and OmpF can be cross-linked and immunoprecipitated. This chain is Vitamin B12 transporter BtuB, found in Escherichia coli (strain K12).